A 657-amino-acid polypeptide reads, in one-letter code: Glycogen debranching enzyme (657 aa).

Catalysis depends on Asp-336, which acts as the Nucleophile. Glu-371 acts as the Proton donor in catalysis. The tract at residues 460–479 (ANGEENRDGTNNNYSNNHGK) is disordered.

Belongs to the glycosyl hydrolase 13 family.

The enzyme catalyses Hydrolysis of (1-&gt;6)-alpha-D-glucosidic linkages to branches with degrees of polymerization of three or four glucose residues in limit dextrin.. It participates in glycan degradation; glycogen degradation. Its function is as follows. Removes maltotriose and maltotetraose chains that are attached by 1,6-alpha-linkage to the limit dextrin main chain, generating a debranched limit dextrin. The chain is Glycogen debranching enzyme from Shigella dysenteriae serotype 1 (strain Sd197).